The sequence spans 252 residues: Phosphate import ATP-binding protein PstB (252 aa).

Positions 6–247 (IDTRDVNFWY…PEKEATQNYI (242 aa)) constitute an ABC transporter domain. 38 to 45 (GPSGCGKS) is an ATP binding site.

It belongs to the ABC transporter superfamily. Phosphate importer (TC 3.A.1.7) family. The complex is composed of two ATP-binding proteins (PstB), two transmembrane proteins (PstC and PstA) and a solute-binding protein (PstS).

It is found in the cell inner membrane. It catalyses the reaction phosphate(out) + ATP + H2O = ADP + 2 phosphate(in) + H(+). Part of the ABC transporter complex PstSACB involved in phosphate import. Responsible for energy coupling to the transport system. In Bacteroides thetaiotaomicron (strain ATCC 29148 / DSM 2079 / JCM 5827 / CCUG 10774 / NCTC 10582 / VPI-5482 / E50), this protein is Phosphate import ATP-binding protein PstB.